The sequence spans 552 residues: Protein FAM234A (552 aa).

Over residues 1–22 (MLDHKDLEAEIHPLKNEERKSQ) the composition is skewed to basic and acidic residues. The segment at 1–40 (MLDHKDLEAEIHPLKNEERKSQENLGNPSKNEDNVKSAPP) is disordered. The Cytoplasmic portion of the chain corresponds to 1 to 49 (MLDHKDLEAEIHPLKNEERKSQENLGNPSKNEDNVKSAPPQSRLSRCRA). Serine 21 carries the post-translational modification Phosphoserine. Residues 50–70 (AAFFLSLFLCLFVVFVVSFVI) form a helical; Signal-anchor for type II membrane protein membrane-spanning segment. The Extracellular segment spans residues 71-552 (PCPDRPASQR…FSRLRYQSEA (482 aa)). N-linked (GlcNAc...) asparagine glycans are attached at residues asparagine 116, asparagine 314, asparagine 389, and asparagine 473.

It belongs to the FAM234 family.

Its subcellular location is the membrane. This is Protein FAM234A from Homo sapiens (Human).